A 348-amino-acid polypeptide reads, in one-letter code: MNDRQAALDQALKQIEKQFGKGSIMKLGEHSDQNISTISSGSLALDIALGVGGYPRGRIIEVYGPESSGKTTVALHAIAEVQAQGGTAAFIDAEHALDPAYAKNLGVNIDELLLSQPDTGEQALEIAEALVRSGAVDMLVIDSVAALVPRAEIEGEMGDAHVGLQARLMSQALRKLSGAINKSKTIAIFINQIREKVGVMFGNPEITPGGRALKFYSTVRLEVRRAEQLKQGTDVMGNKTKIKVVKNKVAPPFRIAEVDIMYGEGISREGELVDMAAEVDVINKSGSWYSYKEERIGQGRENAKQYLKEHTDIRDEISKRVREEYEIDGSNKEPLAETEETLSLLDDE.

64 to 71 (GPESSGKT) contributes to the ATP binding site. Residues 324-335 (EYEIDGSNKEPL) are compositionally biased toward basic and acidic residues. A disordered region spans residues 324-348 (EYEIDGSNKEPLAETEETLSLLDDE). Positions 336–348 (AETEETLSLLDDE) are enriched in acidic residues.

This sequence belongs to the RecA family.

Its subcellular location is the cytoplasm. In terms of biological role, can catalyze the hydrolysis of ATP in the presence of single-stranded DNA, the ATP-dependent uptake of single-stranded DNA by duplex DNA, and the ATP-dependent hybridization of homologous single-stranded DNAs. It interacts with LexA causing its activation and leading to its autocatalytic cleavage. This Listeria ivanovii protein is Protein RecA.